Reading from the N-terminus, the 374-residue chain is Glutamate 5-kinase (374 aa).

Lys17 contributes to the ATP binding site. Residues Ser57, Asp144, and Asn156 each coordinate substrate. ATP contacts are provided by residues 176–177 (SD) and 218–224 (TGGMVTK). A PUA domain is found at 280–358 (QGALVLDDGA…RELARELGPA (79 aa)).

It belongs to the glutamate 5-kinase family.

Its subcellular location is the cytoplasm. The catalysed reaction is L-glutamate + ATP = L-glutamyl 5-phosphate + ADP. The protein operates within amino-acid biosynthesis; L-proline biosynthesis; L-glutamate 5-semialdehyde from L-glutamate: step 1/2. In terms of biological role, catalyzes the transfer of a phosphate group to glutamate to form L-glutamate 5-phosphate. The polypeptide is Glutamate 5-kinase (Streptomyces coelicolor (strain ATCC BAA-471 / A3(2) / M145)).